Here is a 276-residue protein sequence, read N- to C-terminus: Phosphonoacetaldehyde hydrolase (276 aa).

The Nucleophile role is filled by Asp-19. Residues Asp-19 and Ala-21 each coordinate Mg(2+). The active-site Schiff-base intermediate with substrate is the Lys-60. Asp-193 serves as a coordination point for Mg(2+).

Belongs to the HAD-like hydrolase superfamily. PhnX family. Homodimer. Mg(2+) is required as a cofactor.

It carries out the reaction phosphonoacetaldehyde + H2O = acetaldehyde + phosphate + H(+). Its function is as follows. Involved in phosphonate degradation. The polypeptide is Phosphonoacetaldehyde hydrolase (Bordetella bronchiseptica (strain ATCC BAA-588 / NCTC 13252 / RB50) (Alcaligenes bronchisepticus)).